The following is a 453-amino-acid chain: Insulinoma-associated protein 1b (453 aa).

Residues 1–20 (MPKGFLVKRNKKAALVSYRI) form an SNAG domain region. A disordered region spans residues 140-179 (NSNRSGTASGAHAPAIQTGAKRPSADAAERKVSSKSAKKP). Residues 162–171 (PSADAAERKV) show a composition bias toward basic and acidic residues. The C2H2-type 1 zinc-finger motif lies at 252-274 (YRCPECEKVFSCPANLASHRRWH). Positions 298–318 (AEFPSDRDTPSPGLSESGSED) are disordered. 3 consecutive C2H2-type zinc fingers follow at residues 321-343 (YDCQ…ILGH), 383-406 (LTCP…RLLH), and 412-435 (FPCK…NKCH).

It belongs to the INSM1 family.

It is found in the nucleus. Its function is as follows. May act as a transcriptional regulator. May play a role in neurogenesis and neuroendocrine cell differentiation during embryonic development. The sequence is that of Insulinoma-associated protein 1b (insm1b) from Danio rerio (Zebrafish).